We begin with the raw amino-acid sequence, 489 residues long: Glutamate--tRNA ligase (489 aa).

A 'HIGH' region motif is present at residues 10–20; the sequence is PSPTGFLHIGG. The 'KMSKS' region signature appears at 261–265; it reads KLSKR. Lysine 264 serves as a coordination point for ATP.

It belongs to the class-I aminoacyl-tRNA synthetase family. Glutamate--tRNA ligase type 1 subfamily. Monomer.

It localises to the cytoplasm. The catalysed reaction is tRNA(Glu) + L-glutamate + ATP = L-glutamyl-tRNA(Glu) + AMP + diphosphate. Its function is as follows. Catalyzes the attachment of glutamate to tRNA(Glu) in a two-step reaction: glutamate is first activated by ATP to form Glu-AMP and then transferred to the acceptor end of tRNA(Glu). The protein is Glutamate--tRNA ligase of Finegoldia magna (strain ATCC 29328 / DSM 20472 / WAL 2508) (Peptostreptococcus magnus).